The primary structure comprises 190 residues: MTEIVKVREQLQMSLSDFQEQASLQSGQIFVVGCSTSEVLGERIGTSGTMEVAEAIFSELKQFQEQTGIELAFQCCEHLNRALVVEREVAIKYQFEIVTVTPVRSAGGALGTYAYHNLKDPVVVEFIKADAGMDIGDTFIGMHLKHVAVPVRTNVKEIGSAHVTMAKTRGKLIGGARAVYAAVEETTTCR.

It belongs to the UPF0340 family.

This is UPF0340 protein BC_5317 from Bacillus cereus (strain ATCC 14579 / DSM 31 / CCUG 7414 / JCM 2152 / NBRC 15305 / NCIMB 9373 / NCTC 2599 / NRRL B-3711).